Reading from the N-terminus, the 243-residue chain is Small ribosomal subunit protein uS3 (243 aa).

The KH type-2 domain occupies 39–110 (IRVFIQKKYG…QVRINVVEIE (72 aa)). The segment at 216–243 (QPLPVGASPRRKGNRRPQQFEDRSNDGK) is disordered. A compositionally biased stretch (basic and acidic residues) spans 233-243 (QQFEDRSNDGK).

Belongs to the universal ribosomal protein uS3 family. As to quaternary structure, part of the 30S ribosomal subunit. Forms a tight complex with proteins S10 and S14.

Functionally, binds the lower part of the 30S subunit head. Binds mRNA in the 70S ribosome, positioning it for translation. The sequence is that of Small ribosomal subunit protein uS3 from Prochlorococcus marinus (strain SARG / CCMP1375 / SS120).